The chain runs to 247 residues: Triosephosphate isomerase (247 aa).

8 to 10 (NWK) provides a ligand contact to substrate. His-95 (electrophile) is an active-site residue. Glu-162 (proton acceptor) is an active-site residue. 2 residues coordinate substrate: Gly-168 and Ser-207.

Belongs to the triosephosphate isomerase family. Homodimer.

The protein localises to the cytoplasm. It carries out the reaction D-glyceraldehyde 3-phosphate = dihydroxyacetone phosphate. Its pathway is carbohydrate biosynthesis; gluconeogenesis. It participates in carbohydrate degradation; glycolysis; D-glyceraldehyde 3-phosphate from glycerone phosphate: step 1/1. Involved in the gluconeogenesis. Catalyzes stereospecifically the conversion of dihydroxyacetone phosphate (DHAP) to D-glyceraldehyde-3-phosphate (G3P). The polypeptide is Triosephosphate isomerase (Gluconacetobacter diazotrophicus (strain ATCC 49037 / DSM 5601 / CCUG 37298 / CIP 103539 / LMG 7603 / PAl5)).